A 328-amino-acid polypeptide reads, in one-letter code: Malate dehydrogenase (328 aa).

12–18 (GAAGQIG) contacts NAD(+). 2 residues coordinate substrate: Arg95 and Arg101. NAD(+) contacts are provided by residues Asn108, Gln115, and 132-134 (VGN). Substrate is bound by residues Asn134 and Arg165. The active-site Proton acceptor is His190.

The protein belongs to the LDH/MDH superfamily. MDH type 2 family.

The enzyme catalyses (S)-malate + NAD(+) = oxaloacetate + NADH + H(+). In terms of biological role, catalyzes the reversible oxidation of malate to oxaloacetate. This Methylibium petroleiphilum (strain ATCC BAA-1232 / LMG 22953 / PM1) protein is Malate dehydrogenase.